The chain runs to 72 residues: Bowman-Birk type proteinase inhibitor 2a (72 aa).

7 cysteine pairs are disulfide-bonded: cysteine 8/cysteine 61, cysteine 9/cysteine 24, cysteine 12/cysteine 57, cysteine 14/cysteine 22, cysteine 31/cysteine 38, cysteine 35/cysteine 50, and cysteine 40/cysteine 48.

In terms of assembly, dimer.

Inhibits trypsin (IC(50)=0.9 nM) and alpha-chymotrypsin (IC(50)=1.1 nM). This is Bowman-Birk type proteinase inhibitor 2a from Lathyrus sativus (White vetchling).